The following is a 175-amino-acid chain: Shikimate kinase (175 aa).

Residue 11–16 (GAGKTT) participates in ATP binding. Thr15 contributes to the Mg(2+) binding site. Residues Asp33, Arg57, and Gly79 each contribute to the substrate site. Arg118 lines the ATP pocket. Substrate is bound at residue Arg140.

This sequence belongs to the shikimate kinase family. Monomer. Mg(2+) is required as a cofactor.

Its subcellular location is the cytoplasm. It carries out the reaction shikimate + ATP = 3-phosphoshikimate + ADP + H(+). It participates in metabolic intermediate biosynthesis; chorismate biosynthesis; chorismate from D-erythrose 4-phosphate and phosphoenolpyruvate: step 5/7. In terms of biological role, catalyzes the specific phosphorylation of the 3-hydroxyl group of shikimic acid using ATP as a cosubstrate. The chain is Shikimate kinase from Bacteroides thetaiotaomicron (strain ATCC 29148 / DSM 2079 / JCM 5827 / CCUG 10774 / NCTC 10582 / VPI-5482 / E50).